Consider the following 784-residue polypeptide: Toll-like receptor 2 (784 aa).

The first 24 residues, 1–24 (MLHVLWTFWILVAMTDLSRKGCSA), serve as a signal peptide directing secretion. Topologically, residues 25-588 (QASLSCDAAG…RPSVLECHQT (564 aa)) are extracellular. A disulfide bond links C30 and C36. LRR repeat units follow at residues 54–77 (MKSL…GCVN), 78–101 (LRAL…SLSK), 102–125 (LEYL…PLSS), 126–150 (LKYL…NLTH), 151–175 (LQTL…GLTS), 176–199 (LDEL…SIQS), 200–223 (IHHL…TLSS), 224–250 (VGYL…MNSP), 251–278 (MKKL…YTPE), 279–308 (LLEV…ELGK), 309–337 (VETL…LLEK), 338–361 (VKRI…HLKS), 362–388 (LEFL…SWPS), 389–414 (LQTL…TLKN), 415–437 (LTAL…WPGK), 438–457 (MRFL…CIPQ), 458–478 (TLEV…FLPL), 479–500 (LREL…LFPV), and 501–524 (LLVM…SFPK). N-linked (GlcNAc...) asparagine glycosylation is found at N114 and N147. Cysteines 353 and 382 form a disulfide. An N-linked (GlcNAc...) asparagine glycan is attached at N414. C432 and C454 form a disulfide bridge. N442 carries an N-linked (GlcNAc...) asparagine glycan. An LRRCT domain is found at 525-579 (LVSLEAGGNHFICSCELLSFTLEHPALVQVLAGWPDSYLCDSPSRLRGQRVQDAR). The helical transmembrane segment at 589–609 (LLVSGVCCALVLLILLIGGLC) threads the bilayer. At 610 to 784 (HHFHGLWYLR…WVNLRTAIKS (175 aa)) the chain is on the cytoplasmic side. The region spanning 639-782 (ICYDAFVSYS…VFWVNLRTAI (144 aa)) is the TIR domain. A Glycyl lysine isopeptide (Lys-Gly) (interchain with G-Cter in ubiquitin) cross-link involves residue K754. Positions 761 to 778 (YLEWPLDEGQQEVFWVNL) match the ATG16L1-binding motif motif.

The protein belongs to the Toll-like receptor family. As to quaternary structure, interacts with LY96, TLR1 and TLR6 (via extracellular domain). TLR2 seems to exist in heterodimers with either TLR1 or TLR6 before stimulation by the ligand. The heterodimers form bigger oligomers in response to their corresponding ligands as well as further heterotypic associations with other receptors such as CD14 and/or CD36. Binds MYD88 (via TIR domain). Interacts with TICAM1. Interacts with CNPY3. Interacts with ATG16L1. Interacts with PPP1R11. Interacts with TICAM2. Interacts with TIRAP. In terms of processing, ubiquitinated at Lys-754 by PPP1R11, leading to its degradation. Deubiquitinated by USP2. Post-translationally, glycosylation of Asn-442 is critical for secretion of the N-terminal ectodomain of TLR2.

The protein resides in the membrane. It localises to the cytoplasmic vesicle. It is found in the phagosome membrane. The protein localises to the membrane raft. Cooperates with LY96 to mediate the innate immune response to bacterial lipoproteins and other microbial cell wall components. Cooperates with TLR1 or TLR6 to mediate the innate immune response to bacterial lipoproteins or lipopeptides. Acts via MYD88 and TRAF6, leading to NF-kappa-B activation, cytokine secretion and the inflammatory response. May also promote apoptosis in response to lipoproteins. Forms activation clusters composed of several receptors depending on the ligand, these clusters trigger signaling from the cell surface and subsequently are targeted to the Golgi in a lipid-raft dependent pathway. Forms the cluster TLR2:TLR6:CD14:CD36 in response to diacylated lipopeptides and TLR2:TLR1:CD14 in response to triacylated lipopeptides. The sequence is that of Toll-like receptor 2 (TLR2) from Cricetulus griseus (Chinese hamster).